The sequence spans 398 residues: Phosphoglycerate kinase (398 aa).

Substrate contacts are provided by residues 20–22 (DFN), arginine 35, 58–61 (HLGK), arginine 118, and arginine 155. ATP contacts are provided by residues lysine 208, glycine 296, glutamate 327, and 354–357 (GGDS).

Belongs to the phosphoglycerate kinase family. In terms of assembly, monomer.

It localises to the cytoplasm. The catalysed reaction is (2R)-3-phosphoglycerate + ATP = (2R)-3-phospho-glyceroyl phosphate + ADP. It participates in carbohydrate degradation; glycolysis; pyruvate from D-glyceraldehyde 3-phosphate: step 2/5. The chain is Phosphoglycerate kinase from Fusobacterium nucleatum subsp. nucleatum (strain ATCC 25586 / DSM 15643 / BCRC 10681 / CIP 101130 / JCM 8532 / KCTC 2640 / LMG 13131 / VPI 4355).